A 381-amino-acid chain; its full sequence is DnaJ-related protein spj1 (381 aa).

In terms of domain architecture, J spans 5–74 (NFSQKQILGV…RKIYDAYGEE (70 aa)). Positions 72–93 (GEEGLNGQPGGPGGGPGEGFPG) are disordered. The span at 78–93 (GQPGGPGGGPGEGFPG) shows a compositional bias: gly residues. Residues 138 to 225 (GGSFTLEIPV…CKGERVAEVV (88 aa)) form a CR-type zinc finger. CXXCXGXG motif repeat units follow at residues 151–158 (CSVCSGQG), 172–179 (CPVCGGSG), 199–206 (CNACNGNG), and 213–220 (CPRCKGER). A Prevents secretion from ER motif is present at residues 378–381 (FDEL).

The protein resides in the endoplasmic reticulum. The sequence is that of DnaJ-related protein spj1 (spj1) from Schizosaccharomyces pombe (strain 972 / ATCC 24843) (Fission yeast).